Reading from the N-terminus, the 558-residue chain is Potassium-transporting ATPase potassium-binding subunit 1 (558 aa).

Transmembrane regions (helical) follow at residues 1 to 21 (MEII…SGYL), 66 to 86 (FNGF…WLFL), 127 to 147 (MIVM…VCIA), 166 to 186 (IVRF…ILLM), 245 to 265 (IWSN…MLFL), 281 to 301 (ALIL…LTMW), 327 to 347 (FGAG…TGSV), 354 to 374 (LTPL…VFGG), 377 to 397 (VGLM…SLMV), 416 to 436 (IVLV…LAFM), 482 to 502 (ISTG…QLMI), and 531 to 551 (IVFI…LGPI).

The protein belongs to the KdpA family. The system is composed of three essential subunits: KdpA, KdpB and KdpC.

The protein resides in the cell membrane. Part of the high-affinity ATP-driven potassium transport (or Kdp) system, which catalyzes the hydrolysis of ATP coupled with the electrogenic transport of potassium into the cytoplasm. This subunit binds the extracellular potassium ions and delivers the ions to the membrane domain of KdpB through an intramembrane tunnel. The sequence is that of Potassium-transporting ATPase potassium-binding subunit 1 from Staphylococcus aureus (strain MRSA252).